The primary structure comprises 789 residues: UPF0313 protein VC_1711 (789 aa).

Residues 363 to 642 (AYDMIKTSVN…KALLRYHDPA (280 aa)) enclose the Radical SAM core domain. [4Fe-4S] cluster-binding residues include Cys377, Cys381, and Cys384. Residues 669 to 789 (PEKDSDLVTP…NTQRQPQRAR (121 aa)) are disordered. Positions 683 to 698 (KSGRHGANRFATKHTH) are enriched in basic residues. Composition is skewed to polar residues over residues 716-726 (RPNSGNKSNQG), 733-763 (PTGS…QRGS), and 778-789 (RGNTQRQPQRAR).

It belongs to the UPF0313 family. [4Fe-4S] cluster serves as cofactor.

The protein is UPF0313 protein VC_1711 of Vibrio cholerae serotype O1 (strain ATCC 39315 / El Tor Inaba N16961).